The chain runs to 542 residues: uncharacterized protein (542 aa).

5 consecutive transmembrane segments (helical) span residues 4-23 (ILRD…GYPL), 28-47 (IGGI…AFGA), 57-79 (IVYQ…HGFL), 86-108 (GVIY…LIPH), and 151-173 (PVVG…IYLA). RCK C-terminal domains follow at residues 186–270 (RTLK…VIGC) and 273–356 (EVQA…LGDS). Helical transmembrane passes span 365-384 (IAVL…VPIP), 389-408 (ITVR…FLGA), 415-437 (LVWV…IFLA), 457-479 (WAIL…YVGY), 484-506 (IPMG…LGFA), and 519-541 (YAMV…IAVL).

This sequence belongs to the AAE transporter (TC 2.A.81) family.

The protein resides in the cell membrane. This is an uncharacterized protein from Symbiobacterium thermophilum (strain DSM 24528 / JCM 14929 / IAM 14863 / T).